A 66-amino-acid polypeptide reads, in one-letter code: Large ribosomal subunit protein bL33c (66 aa).

The protein belongs to the bacterial ribosomal protein bL33 family.

The protein resides in the plastid. The protein localises to the chloroplast. In Vitis vinifera (Grape), this protein is Large ribosomal subunit protein bL33c.